Here is a 374-residue protein sequence, read N- to C-terminus: Chaperone protein DnaJ (374 aa).

The 66-residue stretch at D5–G70 folds into the J domain. Residues G132–T210 form a CR-type zinc finger. Zn(2+) is bound by residues C145, C148, C162, C165, C184, C187, C198, and C201. CXXCXGXG motif repeat units lie at residues C145–G152, C162–G169, C184–G191, and C198–G205.

The protein belongs to the DnaJ family. As to quaternary structure, homodimer. Zn(2+) is required as a cofactor.

The protein localises to the cytoplasm. Its function is as follows. Participates actively in the response to hyperosmotic and heat shock by preventing the aggregation of stress-denatured proteins and by disaggregating proteins, also in an autonomous, DnaK-independent fashion. Unfolded proteins bind initially to DnaJ; upon interaction with the DnaJ-bound protein, DnaK hydrolyzes its bound ATP, resulting in the formation of a stable complex. GrpE releases ADP from DnaK; ATP binding to DnaK triggers the release of the substrate protein, thus completing the reaction cycle. Several rounds of ATP-dependent interactions between DnaJ, DnaK and GrpE are required for fully efficient folding. Also involved, together with DnaK and GrpE, in the DNA replication of plasmids through activation of initiation proteins. This chain is Chaperone protein DnaJ, found in Saccharophagus degradans (strain 2-40 / ATCC 43961 / DSM 17024).